The following is a 323-amino-acid chain: Serine/threonine-protein phosphatase PP1-gamma catalytic subunit (323 aa).

The Mn(2+) site is built by Asp64, His66, Asp92, and Asn124. Residue His125 is the Proton donor of the active site. Positions 173 and 248 each coordinate Mn(2+). The tract at residues 300–323 is disordered; it reads EKKKPNASRPVTPPRGMITKQAKK.

The protein belongs to the PPP phosphatase family. PP-1 subfamily. In terms of assembly, PP1 comprises a catalytic subunit, ppp1c1, ppp1cb or ppp1cc, which is folded into its native form by inhibitor 2 and glycogen synthetase kinase 3, and then is complexed to one or several targeting or regulatory subunits. Mn(2+) serves as cofactor.

Its subcellular location is the cytoplasm. The protein resides in the nucleus. It is found in the cleavage furrow. It localises to the nucleolus. The protein localises to the nucleoplasm. Its subcellular location is the chromosome. The protein resides in the centromere. It is found in the kinetochore. It localises to the nucleus speckle. The protein localises to the midbody. Its subcellular location is the mitochondrion. The protein resides in the cytoskeleton. It is found in the microtubule organizing center. It carries out the reaction O-phospho-L-seryl-[protein] + H2O = L-seryl-[protein] + phosphate. It catalyses the reaction O-phospho-L-threonyl-[protein] + H2O = L-threonyl-[protein] + phosphate. Functionally, protein phosphatase 1 (PP1) is essential for cell division, and participates in the regulation of glycogen metabolism, muscle contractility and protein synthesis. Promotes nuclear envelope reassembly by targeting nuclear membrane vesicles to chromatin at the end of mitosis. Acts by dephosphorylating membrane proteins such as lamin B receptor (lbr) to regulate the binding of membrane proteins to chromatin. The chain is Serine/threonine-protein phosphatase PP1-gamma catalytic subunit from Xenopus tropicalis (Western clawed frog).